The sequence spans 467 residues: Probable amino acid permease 7 (467 aa).

Topologically, residues 1–29 (MDIKEDDESRVITPTELQLHDSVTARTGT) are cytoplasmic. Residues 30–50 (LWTAVAHIITGVIGAGVLSLA) form a helical membrane-spanning segment. At 51 to 58 (WATAELGW) the chain is on the extracellular side. A helical transmembrane segment spans residues 59 to 79 (IAGPAALIAFAGVTLLSAFLL). Topologically, residues 80 to 111 (SDCYRFPDPNNGPLRLNSYSQAVKLYLGKKNE) are cytoplasmic. Residues 112 to 132 (IVCGVVVYISLFGCGIAYTIV) form a helical membrane-spanning segment. At 133-163 (IATCSRAIMKSNCYHRNGHNATCSYGDNNNY) the chain is on the extracellular side. The next 2 helical transmembrane spans lie at 164–184 (FMVL…FHNM) and 185–205 (VWLS…GIGL). Over 206–231 (ALGKIIENRKIEGSIRGIPAENRGEK) the chain is Extracellular. The chain crosses the membrane as a helical span at residues 232-252 (VWIVFQALGNIAFSYPFSIIL). At 253–274 (LEIQDTLRSPPAEKQTMKKAST) the chain is on the cytoplasmic side. The helical transmembrane segment at 275–295 (VAVFIQTFFFFCCGCFGYAAF) threads the bilayer. The Extracellular segment spans residues 296–312 (GDSTPGNLLTGFGFYEP). Residues 313–333 (FWLVDFANACIVLHLVGGYQV) form a helical membrane-spanning segment. Topologically, residues 334–383 (YSQPIFAAAERSLTKKYPENKFIARFYGFKLPLLRGETVRLNPMRMCLRT) are cytoplasmic. The next 2 helical transmembrane spans lie at 384-404 (MYVL…EVLG) and 405-425 (VVGA…MCIL). The Cytoplasmic portion of the chain corresponds to 426–443 (QKKIRSWTRPWLLLRGFS). The helical transmembrane segment at 444–464 (FVCLLVCLLSLVGSIYGLVGA) threads the bilayer. Over 465–467 (KFG) the chain is Extracellular.

This sequence belongs to the amino acid/polyamine transporter 2 family. Amino acid/auxin permease (AAAP) (TC 2.A.18.2) subfamily.

It is found in the cell membrane. Its function is as follows. Amino acid-proton symporter. Stereospecific transporter with a broad specificity for neutral amino acids. This chain is Probable amino acid permease 7 (AAP7), found in Arabidopsis thaliana (Mouse-ear cress).